Consider the following 187-residue polypeptide: Transcriptional regulator VspR (187 aa).

Functionally, represses the transcription of several genes encoded within the Vibrio 7th pandemic island-1 (VSP-1), including dncV, VC_0176, VC_0178 and VC_0180. The sequence is that of Transcriptional regulator VspR (vspR) from Vibrio cholerae serotype O1 (strain ATCC 39315 / El Tor Inaba N16961).